Here is a 710-residue protein sequence, read N- to C-terminus: Prolyl endopeptidase (710 aa).

N-acetylmethionine is present on Met-1. Residue Lys-157 is modified to N6-acetyllysine. Active-site charge relay system residues include Ser-554, Asp-641, and His-680.

Belongs to the peptidase S9A family. As to expression, expressed in all tissues tested: uterus, kidney, heart, lung, small intestine, smooth muscle, liver, spleen, thymus, adrenal, pituitary and whole brain.

Its subcellular location is the cytoplasm. It carries out the reaction Hydrolysis of Pro-|-Xaa &gt;&gt; Ala-|-Xaa in oligopeptides.. Its activity is regulated as follows. Inhibited by DFP, Z-Pro-prolinal and poststatin, but not by PMSF, SBTI, EDTA, leupeptin, E-64 and pepstatin. In terms of biological role, cleaves peptide bonds on the C-terminal side of prolyl residues within peptides that are up to approximately 30 amino acids long. Has high activity on the succinyl- (suc-) peptide-4-methylcoumaryl-7-amide (MCA) substrates suc-Gly-Pro-Leu-Gly-Pro-MCA, suc-Gly-Pro-MCA and suc-Ala-Ala-Ala-MCA. The protein is Prolyl endopeptidase of Rattus norvegicus (Rat).